The primary structure comprises 666 residues: Frizzled-3 (666 aa).

Residues 1 to 22 form the signal peptide; sequence MAMTWIVFSLWPLTVFMGHIGG. Positions 23-136 constitute an FZ domain; the sequence is HSLFSCEPIT…CSRFPDCDEP (114 aa). At 23-205 the chain is on the extracellular side; it reads HSLFSCEPIT…REELSFARYF (183 aa). Disulfide bonds link Cys-28–Cys-89, Cys-36–Cys-82, Cys-73–Cys-110, Cys-99–Cys-133, and Cys-103–Cys-127. The N-linked (GlcNAc...) asparagine glycan is linked to Asn-42. Residues 206–226 form a helical membrane-spanning segment; sequence IGLISIICLSATLFTFLTFLI. The Cytoplasmic portion of the chain corresponds to 227-237; that stretch reads DVTRFRYPERP. A helical membrane pass occupies residues 238–258; sequence IIFYAVCYMMVSLIFFIGFLL. At 259–288 the chain is on the extracellular side; the sequence is EDRVACNASIPAQYKASTVTQGSHNKACTM. The N-linked (GlcNAc...) asparagine glycan is linked to Asn-265. Residues 289 to 309 form a helical membrane-spanning segment; the sequence is LFMILYFFTMAGSVWWVILTI. Residues 310 to 328 lie on the Cytoplasmic side of the membrane; the sequence is TWFLAAVPKWGSEAIEKKA. Residues 329–349 traverse the membrane as a helical segment; sequence LLFHASAWGIPGTLTIILLAM. Over 350–374 the chain is Extracellular; it reads NKIEGDNISGVCFVGLYDVDALRYF. Asn-356 carries an N-linked (GlcNAc...) asparagine glycan. The helical transmembrane segment at 375–395 threads the bilayer; the sequence is VLAPLCLYVVVGVSLLLAGII. The Cytoplasmic segment spans residues 396–420; the sequence is SLNRVRIEIPLEKENQDKLVKFMIR. Residues 421 to 441 traverse the membrane as a helical segment; the sequence is IGVFSILYLVPLLVVIGCYFY. Topologically, residues 442-477 are extracellular; sequence EQAYRGIWETTWIQERCREYHIPCPYQVTQMSRPDL. The chain crosses the membrane as a helical span at residues 478 to 498; sequence ILFLMKYLMALIVGIPSVFWV. The Cytoplasmic portion of the chain corresponds to 499–666; sequence GSKKTCFEWA…RVIEEDGTSA (168 aa). Residues 502 to 507 carry the Lys-Thr-X-X-X-Trp motif, mediates interaction with the PDZ domain of Dvl family members motif; the sequence is KTCFEW. The interval 538–666 is disordered; it reads RDPNTPIIRK…RVIEEDGTSA (129 aa). Over residues 550 to 565 the composition is skewed to polar residues; sequence GTSTQGTSTHASSTQL. Residues 617–638 show a composition bias toward basic and acidic residues; sequence LTDHSRHSSSHRLNEQSRHSSI. Polar residues predominate over residues 639 to 656; it reads RDLSNNPMTHITHGTSMN.

The protein belongs to the G-protein coupled receptor Fz/Smo family. Interacts with VANGL2. Post-translationally, ubiquitinated by ZNRF3, leading to its degradation by the proteasome. As to expression, widely expressed. Relatively high expression in the CNS, including regions of the limbic system, in kidney, pancreas, skeletal muscle, uterus and testis.

It is found in the membrane. It localises to the cell membrane. The protein localises to the cell surface. Its subcellular location is the apical cell membrane. Its function is as follows. Receptor for Wnt proteins. Most of frizzled receptors are coupled to the beta-catenin canonical signaling pathway, which leads to the activation of disheveled proteins, inhibition of GSK-3 kinase, nuclear accumulation of beta-catenin and activation of Wnt target genes. A second signaling pathway involving PKC and calcium fluxes has been seen for some family members, but it is not yet clear if it represents a distinct pathway or if it can be integrated in the canonical pathway, as PKC seems to be required for Wnt-mediated inactivation of GSK-3 kinase. Both pathways seem to involve interactions with G-proteins. Activation by Wnt5A stimulates PKC activity via a G-protein-dependent mechanism. Involved in transduction and intercellular transmission of polarity information during tissue morphogenesis and/or in differentiated tissues. Plays a role in controlling early axon growth and guidance processes necessary for the formation of a subset of central and peripheral major fiber tracts. Required for the development of major fiber tracts in the central nervous system, including: the anterior commissure, the corpus callosum, the thalamocortical, corticothalamic and nigrostriatal tracts, the corticospinal tract, the fasciculus retroflexus, the mammillothalamic tract, the medial lemniscus, and ascending fiber tracts from the spinal cord to the brain. In the peripheral nervous system, controls axon growth in distinct populations of cranial and spinal motor neurons, including the facial branchimotor nerve, the hypoglossal nerve, the phrenic nerve, and motor nerves innervating dorsal limbs. Involved in the migration of cranial neural crest cells. May also be implicated in the transmission of sensory information from the trunk and limbs to the brain. Controls commissural sensory axons guidance after midline crossing along the anterior-posterior axis in the developing spinal cord in a Wnt-dependent signaling pathway. Together with FZD6, is involved in the neural tube closure and plays a role in the regulation of the establishment of planar cell polarity (PCP), particularly in the orientation of asymmetric bundles of stereocilia on the apical faces of a subset of auditory and vestibular sensory cells located in the inner ear. Promotes neurogenesis by maintaining sympathetic neuroblasts within the cell cycle in a beta-catenin-dependent manner. This Homo sapiens (Human) protein is Frizzled-3 (FZD3).